Reading from the N-terminus, the 141-residue chain is Large ribosomal subunit protein uL13 (141 aa).

Belongs to the universal ribosomal protein uL13 family. As to quaternary structure, part of the 50S ribosomal subunit.

Functionally, this protein is one of the early assembly proteins of the 50S ribosomal subunit, although it is not seen to bind rRNA by itself. It is important during the early stages of 50S assembly. In Helicobacter pylori (strain G27), this protein is Large ribosomal subunit protein uL13.